The sequence spans 208 residues: Putative archaetidylserine decarboxylase proenzyme (208 aa).

Ser-171 functions as the Schiff-base intermediate with substrate; via pyruvic acid in the catalytic mechanism. The residue at position 171 (Ser-171) is a Pyruvic acid (Ser); by autocatalysis.

This sequence belongs to the phosphatidylserine decarboxylase family. PSD-A subfamily. As to quaternary structure, heterodimer of a large membrane-associated beta subunit and a small pyruvoyl-containing alpha subunit. It depends on pyruvate as a cofactor. In terms of processing, is synthesized initially as an inactive proenzyme. Formation of the active enzyme involves a self-maturation process in which the active site pyruvoyl group is generated from an internal serine residue via an autocatalytic post-translational modification. Two non-identical subunits are generated from the proenzyme in this reaction, and the pyruvate is formed at the N-terminus of the alpha chain, which is derived from the carboxyl end of the proenzyme. The post-translation cleavage follows an unusual pathway, termed non-hydrolytic serinolysis, in which the side chain hydroxyl group of the serine supplies its oxygen atom to form the C-terminus of the beta chain, while the remainder of the serine residue undergoes an oxidative deamination to produce ammonia and the pyruvoyl prosthetic group on the alpha chain.

The protein resides in the cell membrane. It carries out the reaction archaetidylserine + H(+) = archaetidylethanolamine + CO2. Catalyzes the formation of archaetidylethanolamine (PtdEtn) from archaetidylserine (PtdSer). This is Putative archaetidylserine decarboxylase proenzyme from Methanococcoides burtonii (strain DSM 6242 / NBRC 107633 / OCM 468 / ACE-M).